Consider the following 177-residue polypeptide: Large ribosomal subunit protein uL6 (177 aa).

It belongs to the universal ribosomal protein uL6 family. As to quaternary structure, part of the 50S ribosomal subunit.

This protein binds to the 23S rRNA, and is important in its secondary structure. It is located near the subunit interface in the base of the L7/L12 stalk, and near the tRNA binding site of the peptidyltransferase center. In Shewanella baltica (strain OS223), this protein is Large ribosomal subunit protein uL6.